A 317-amino-acid chain; its full sequence is Serpentine receptor class delta-26 (317 aa).

Helical transmembrane passes span 5–25, 38–58, 83–103, 122–142, 176–196, 227–247, and 258–278; these read LLHT…MYLA, AIIT…FFVM, ACYV…IWMI, SLVF…AAWI, ITLI…YAWI, FQVF…AMFG, and LVSI…ILFV.

The protein belongs to the nematode receptor-like protein srd family.

The protein localises to the membrane. This chain is Serpentine receptor class delta-26 (srd-26), found in Caenorhabditis elegans.